Here is a 274-residue protein sequence, read N- to C-terminus: Rhamnulose-1-phosphate aldolase (274 aa).

The active site involves Glu-117. The Zn(2+) site is built by His-141, His-143, and His-212.

The protein belongs to the aldolase class II family. RhaD subfamily. Homotetramer. Zn(2+) serves as cofactor.

The protein resides in the cytoplasm. It carries out the reaction L-rhamnulose 1-phosphate = (S)-lactaldehyde + dihydroxyacetone phosphate. Its pathway is carbohydrate degradation; L-rhamnose degradation; glycerone phosphate from L-rhamnose: step 3/3. Catalyzes the reversible cleavage of L-rhamnulose-1-phosphate to dihydroxyacetone phosphate (DHAP) and L-lactaldehyde. The polypeptide is Rhamnulose-1-phosphate aldolase (Escherichia coli O6:H1 (strain CFT073 / ATCC 700928 / UPEC)).